The primary structure comprises 130 residues: Glycine cleavage system H protein (130 aa).

The region spanning K22–E103 is the Lipoyl-binding domain. N6-lipoyllysine is present on K63.

The protein belongs to the GcvH family. As to quaternary structure, the glycine cleavage system is composed of four proteins: P, T, L and H. Requires (R)-lipoate as cofactor.

In terms of biological role, the glycine cleavage system catalyzes the degradation of glycine. The H protein shuttles the methylamine group of glycine from the P protein to the T protein. In Clostridium botulinum (strain ATCC 19397 / Type A), this protein is Glycine cleavage system H protein.